A 700-amino-acid chain; its full sequence is MARTTPIERYRNIGISAHIDAGKTTTTERILFYTGVSHKIGEVHDGAATMDWMEQEQERGITITSAATTAFWSGMSQQFPQHRINVIDTPGHVDFTVEVERSMRVLDGAVMVYCAVGGVQPQSETVWRQANKYEVPRIAFVNKMDRTGANFLRVVEQLKTRLGANAVPLQLPIGAEENFTGVVDLIKMKAINWNEADQGMTFTYEEVPANMQADCEEWRQNLVEAAAEASEELMEKYLGGEDLTEEEIKSALRQRVLANEIILVTCGSAFKNKGVQAMLDAVVEYLPAPTDIPAIKGINPDETEGERHASDEEPFSSLAFKIATDPFVGNLTFFRVYSGVINSGDTVLNSVRQKRERFGRIVQMHANKREEIKEVRAGDIAAAIGLKDVTTGDTLCAIEAPIILERMEFPEPVISVAVEPKTKADQEKMGLALGRLAQEDPSFRVHTDEESGETIISGMGELHLDIIVDRMKREFKVEANIGKPQVSYRETIRTRVNDVEGKHAKQSGGRGQYGHVVIDLYPLDPEGPGYEFVNEIKGGVIPGEYIPAVDKGIQEQLKSGPLAGYPVVDLGVRLHFGSYHDVDSSELAFKLAASLAFKAAFSKANPVLLEPIMKVEVETPPEYVGDVIGDLSRRRAMVNGQEANEFVVKIDAEVPLSEMFGYATDLRSQTQGRASYSMEPLKYAEAPTSVAAAVIEARKK.

The tr-type G domain occupies 8–290 (ERYRNIGISA…AVVEYLPAPT (283 aa)). GTP-binding positions include 17–24 (AHIDAGKT), 88–92 (DTPGH), and 142–145 (NKMD).

This sequence belongs to the TRAFAC class translation factor GTPase superfamily. Classic translation factor GTPase family. EF-G/EF-2 subfamily.

The protein resides in the cytoplasm. Its function is as follows. Catalyzes the GTP-dependent ribosomal translocation step during translation elongation. During this step, the ribosome changes from the pre-translocational (PRE) to the post-translocational (POST) state as the newly formed A-site-bound peptidyl-tRNA and P-site-bound deacylated tRNA move to the P and E sites, respectively. Catalyzes the coordinated movement of the two tRNA molecules, the mRNA and conformational changes in the ribosome. This is Elongation factor G from Haemophilus influenzae (strain 86-028NP).